A 371-amino-acid polypeptide reads, in one-letter code: Queuine tRNA-ribosyltransferase (371 aa).

Asp90 serves as the catalytic Proton acceptor. Residues 90–94, Asp144, Gln189, and Gly215 each bind substrate; that span reads DSGGF. The segment at 246–252 is RNA binding; the sequence is GVGTPEN. The active-site Nucleophile is Asp265. Residues 270 to 274 are RNA binding; important for wobble base 34 recognition; that stretch reads TRNAR. Cys303, Cys305, Cys308, and His334 together coordinate Zn(2+).

It belongs to the queuine tRNA-ribosyltransferase family. In terms of assembly, homodimer. Within each dimer, one monomer is responsible for RNA recognition and catalysis, while the other monomer binds to the replacement base PreQ1. The cofactor is Zn(2+).

The catalysed reaction is 7-aminomethyl-7-carbaguanine + guanosine(34) in tRNA = 7-aminomethyl-7-carbaguanosine(34) in tRNA + guanine. Its pathway is tRNA modification; tRNA-queuosine biosynthesis. Functionally, catalyzes the base-exchange of a guanine (G) residue with the queuine precursor 7-aminomethyl-7-deazaguanine (PreQ1) at position 34 (anticodon wobble position) in tRNAs with GU(N) anticodons (tRNA-Asp, -Asn, -His and -Tyr). Catalysis occurs through a double-displacement mechanism. The nucleophile active site attacks the C1' of nucleotide 34 to detach the guanine base from the RNA, forming a covalent enzyme-RNA intermediate. The proton acceptor active site deprotonates the incoming PreQ1, allowing a nucleophilic attack on the C1' of the ribose to form the product. After dissociation, two additional enzymatic reactions on the tRNA convert PreQ1 to queuine (Q), resulting in the hypermodified nucleoside queuosine (7-(((4,5-cis-dihydroxy-2-cyclopenten-1-yl)amino)methyl)-7-deazaguanosine). The polypeptide is Queuine tRNA-ribosyltransferase (Helicobacter pylori (strain P12)).